A 342-amino-acid chain; its full sequence is SWR1-complex protein 5 (342 aa).

Disordered regions lie at residues 1–126, 142–178, and 214–238; these read MAPT…PVTI, PRTS…DPDS, and LGEN…RMPR. Composition is skewed to acidic residues over residues 8-20 and 33-43; these read LAED…DSDF and ISDDDDEEAGE. Residues 78–87 are compositionally biased toward basic residues; the sequence is GEKRQKKTKT. The BCNT-C domain maps to 260–341; the sequence is NLSMASRLQA…RRARMAQAGK (82 aa).

The protein belongs to the SWC5 family. In terms of assembly, component of the SWR1 chromatin remodeling complex.

Its subcellular location is the nucleus. In terms of biological role, component of the SWR1 complex which mediates the ATP-dependent exchange of histone H2A for the H2A variant H2A.Z leading to transcriptional regulation of selected genes by chromatin remodeling. Involved in chromosome stability. In Neurospora crassa (strain ATCC 24698 / 74-OR23-1A / CBS 708.71 / DSM 1257 / FGSC 987), this protein is SWR1-complex protein 5 (crc-2).